Reading from the N-terminus, the 478-residue chain is Probable cytosolic Fe-S cluster assembly factor CPIJ010948 (478 aa).

[4Fe-4S] cluster-binding residues include Cys23, Cys69, Cys72, Cys75, Cys189, Cys245, Cys396, and Cys400.

This sequence belongs to the NARF family.

Its function is as follows. Component of the cytosolic iron-sulfur (Fe/S) protein assembly machinery. Required for maturation of extramitochondrial Fe/S proteins. This Culex quinquefasciatus (Southern house mosquito) protein is Probable cytosolic Fe-S cluster assembly factor CPIJ010948.